A 165-amino-acid polypeptide reads, in one-letter code: MMIIGIDPGLEFTGWGVVSSTNSQSVCLLDSGVISTRGISRESEKLYKIYVSLLSVLSLYKIDEASIEKVFINSNPRSSMSLCYARAASTISVMSRGIDIYEYSSTAIKKCITGSGMAPKEQVSFMVRSSLGIKQDVEINNHSSDAIAAALCHVYNTRNRNFALK.

Active-site residues include Asp-7, Glu-68, and His-142. Mg(2+) contacts are provided by Asp-7, Glu-68, and His-142.

Belongs to the RuvC family. In terms of assembly, homodimer which binds Holliday junction (HJ) DNA. The HJ becomes 2-fold symmetrical on binding to RuvC with unstacked arms; it has a different conformation from HJ DNA in complex with RuvA. In the full resolvosome a probable DNA-RuvA(4)-RuvB(12)-RuvC(2) complex forms which resolves the HJ. Requires Mg(2+) as cofactor.

Its subcellular location is the cytoplasm. It catalyses the reaction Endonucleolytic cleavage at a junction such as a reciprocal single-stranded crossover between two homologous DNA duplexes (Holliday junction).. Functionally, the RuvA-RuvB-RuvC complex processes Holliday junction (HJ) DNA during genetic recombination and DNA repair. Endonuclease that resolves HJ intermediates. Cleaves cruciform DNA by making single-stranded nicks across the HJ at symmetrical positions within the homologous arms, yielding a 5'-phosphate and a 3'-hydroxyl group; requires a central core of homology in the junction. The consensus cleavage sequence is 5'-(A/T)TT(C/G)-3'. Cleavage occurs on the 3'-side of the TT dinucleotide at the point of strand exchange. HJ branch migration catalyzed by RuvA-RuvB allows RuvC to scan DNA until it finds its consensus sequence, where it cleaves and resolves the cruciform DNA. This Anaplasma marginale (strain Florida) protein is Crossover junction endodeoxyribonuclease RuvC.